A 132-amino-acid polypeptide reads, in one-letter code: Small ribosomal subunit protein uS8 (132 aa).

This sequence belongs to the universal ribosomal protein uS8 family. As to quaternary structure, part of the 30S ribosomal subunit. Contacts proteins S5 and S12.

In terms of biological role, one of the primary rRNA binding proteins, it binds directly to 16S rRNA central domain where it helps coordinate assembly of the platform of the 30S subunit. The polypeptide is Small ribosomal subunit protein uS8 (Xanthomonas campestris pv. campestris (strain 8004)).